The sequence spans 404 residues: Argininosuccinate synthase (404 aa).

Residues 12 to 20 (AYSGGLDTS) and Ala-39 contribute to the ATP site. Residues Tyr-91 and Ser-96 each coordinate L-citrulline. Gly-121 contributes to the ATP binding site. Residues Thr-123, Asn-127, and Asp-128 each coordinate L-aspartate. An L-citrulline-binding site is contributed by Asn-127. The L-citrulline site is built by Arg-131, Ser-180, Ser-189, Glu-265, and Tyr-277.

It belongs to the argininosuccinate synthase family. Type 1 subfamily. Homotetramer.

It is found in the cytoplasm. The catalysed reaction is L-citrulline + L-aspartate + ATP = 2-(N(omega)-L-arginino)succinate + AMP + diphosphate + H(+). It participates in amino-acid biosynthesis; L-arginine biosynthesis; L-arginine from L-ornithine and carbamoyl phosphate: step 2/3. This chain is Argininosuccinate synthase, found in Vibrio campbellii (strain ATCC BAA-1116).